A 379-amino-acid polypeptide reads, in one-letter code: Chaperone protein DnaJ (379 aa).

The region spanning 5-71 (DYYEILGVSR…EKRAMYDRFG (67 aa)) is the J domain. The CR-type zinc finger occupies 149–231 (GTTIPIEYDR…CGGSGRIRKR (83 aa)). Cys162, Cys165, Cys179, Cys182, Cys205, Cys208, Cys219, and Cys222 together coordinate Zn(2+). 4 CXXCXGXG motif repeats span residues 162–169 (CSHCNGEG), 179–186 (CPKCHGTG), 205–212 (CNQCGGTG), and 219–226 (CHVCGGSG).

The protein belongs to the DnaJ family. In terms of assembly, homodimer. Zn(2+) serves as cofactor.

It localises to the cytoplasm. Functionally, participates actively in the response to hyperosmotic and heat shock by preventing the aggregation of stress-denatured proteins and by disaggregating proteins, also in an autonomous, DnaK-independent fashion. Unfolded proteins bind initially to DnaJ; upon interaction with the DnaJ-bound protein, DnaK hydrolyzes its bound ATP, resulting in the formation of a stable complex. GrpE releases ADP from DnaK; ATP binding to DnaK triggers the release of the substrate protein, thus completing the reaction cycle. Several rounds of ATP-dependent interactions between DnaJ, DnaK and GrpE are required for fully efficient folding. Also involved, together with DnaK and GrpE, in the DNA replication of plasmids through activation of initiation proteins. The sequence is that of Chaperone protein DnaJ from Thermosipho africanus (strain TCF52B).